The chain runs to 477 residues: Oxidative stress-induced growth inhibitor 1 (477 aa).

Ser-12 is modified (phosphoserine).

The protein belongs to the OKL38 family. NADPH is required as a cofactor. In terms of tissue distribution, ubiquitous. Highest expression in the ovary, testis, kidney, skeletal muscle and liver.

The protein resides in the midbody. Functionally, monooxygenase catalytic activity. Involved in regulation of cytokinesis; promotes RHOA activity, probably acting locally at the midbody in late cytokinesis. Monooxygenase activity is involved in stabilizing transient structures between daughter cells, termed intercellular bridges, before abscission. Regulates differentiation and proliferation through the regulation of cell death. The chain is Oxidative stress-induced growth inhibitor 1 from Homo sapiens (Human).